Reading from the N-terminus, the 51-residue chain is MDTIDLGNNESLVYGVFPNQDGTFTAMTYTKSKTFKTENGARRWLERNSGE.

This sequence to E.coli YdaF.

This is an uncharacterized protein from Escherichia coli O157:H7.